A 920-amino-acid polypeptide reads, in one-letter code: Isoleucine--tRNA ligase (920 aa).

A 'HIGH' region motif is present at residues 58 to 68 (PYANGHLHLGH). L-isoleucyl-5'-AMP is bound at residue E569. A 'KMSKS' region motif is present at residues 610 to 614 (KMSKS). K613 is a binding site for ATP. Residues C895, C898, C910, and C913 each coordinate Zn(2+).

The protein belongs to the class-I aminoacyl-tRNA synthetase family. IleS type 1 subfamily. As to quaternary structure, monomer. It depends on Zn(2+) as a cofactor.

It localises to the cytoplasm. The enzyme catalyses tRNA(Ile) + L-isoleucine + ATP = L-isoleucyl-tRNA(Ile) + AMP + diphosphate. Its function is as follows. Catalyzes the attachment of isoleucine to tRNA(Ile). As IleRS can inadvertently accommodate and process structurally similar amino acids such as valine, to avoid such errors it has two additional distinct tRNA(Ile)-dependent editing activities. One activity is designated as 'pretransfer' editing and involves the hydrolysis of activated Val-AMP. The other activity is designated 'posttransfer' editing and involves deacylation of mischarged Val-tRNA(Ile). In Helicobacter pylori (strain P12), this protein is Isoleucine--tRNA ligase.